Here is an 81-residue protein sequence, read N- to C-terminus: Photosystem I iron-sulfur center (81 aa).

4Fe-4S ferredoxin-type domains lie at 2 to 31 and 39 to 68; these read SHSV…MIPW and IASA…VRVY. [4Fe-4S] cluster-binding residues include Cys-11, Cys-14, Cys-17, Cys-21, Cys-48, Cys-51, Cys-54, and Cys-58.

In terms of assembly, the eukaryotic PSI reaction center is composed of at least 11 subunits. It depends on [4Fe-4S] cluster as a cofactor.

The protein resides in the plastid. Its subcellular location is the chloroplast thylakoid membrane. It carries out the reaction reduced [plastocyanin] + hnu + oxidized [2Fe-2S]-[ferredoxin] = oxidized [plastocyanin] + reduced [2Fe-2S]-[ferredoxin]. Functionally, apoprotein for the two 4Fe-4S centers FA and FB of photosystem I (PSI); essential for photochemical activity. FB is the terminal electron acceptor of PSI, donating electrons to ferredoxin. The C-terminus interacts with PsaA/B/D and helps assemble the protein into the PSI complex. Required for binding of PsaD and PsaE to PSI. PSI is a plastocyanin-ferredoxin oxidoreductase, converting photonic excitation into a charge separation, which transfers an electron from the donor P700 chlorophyll pair to the spectroscopically characterized acceptors A0, A1, FX, FA and FB in turn. This Sorghum bicolor (Sorghum) protein is Photosystem I iron-sulfur center.